The primary structure comprises 406 residues: Argininosuccinate synthase (406 aa).

9-17 (AYSGGLDTS) contacts ATP. L-citrulline is bound at residue Tyr86. Gly116 provides a ligand contact to ATP. L-aspartate-binding residues include Thr118, Asn122, and Asp123. Asn122 serves as a coordination point for L-citrulline. Positions 126, 174, 183, 259, and 271 each coordinate L-citrulline.

The protein belongs to the argininosuccinate synthase family. Type 1 subfamily. Homotetramer.

Its subcellular location is the cytoplasm. It carries out the reaction L-citrulline + L-aspartate + ATP = 2-(N(omega)-L-arginino)succinate + AMP + diphosphate + H(+). Its pathway is amino-acid biosynthesis; L-arginine biosynthesis; L-arginine from L-ornithine and carbamoyl phosphate: step 2/3. The protein is Argininosuccinate synthase of Geobacillus thermodenitrificans (strain NG80-2).